Consider the following 688-residue polypeptide: MSGAALGLEIVFVFFLALFLLHRYGDFKKQHRLVIIATLLAWYLCFLIVFILPLDVSTTIYNRCKLAVNSSPAESNSSFVTLAPSKQQCFKPWSYIPNGIMPIFWRVVYWTSQFLTWILLPFMQSYARSGGFSITGKIKTALIENAIYYGTYLLIFGAFLIYVAVNPKFNLQWNQLQTIGIAAANTWGLFLLVLLLGYGLVEIPRSHWNGAKRGYLLMKTYFKAAKLMTEKADAEENLEDIMEEVRKVSESIKYNHPLRKCVDTILKKCPTEYQERMGRNMDDYEDFDERQNSYPSEKSLVKLHKQVIYSVQRHRRTQVQWQILLEQAFYLEDVAKNETSATRQFVHTFQSQEPENKIIQYFYTPTVEWYWECLLRPWFYRVLAVVLAAFSVIVVWSECTFFSTRPVLSLVAVFIQLAEKTYNYIYIEMACFLTIFFLSICVYSTVFRIRVFNYYYLASHHQTDAYSLLFSGMLFCRLTPPLCLNFLGLTHMDATISHTDAQPTAYTSIMGSMKVLSFIADGFYIYYPMLVVILCIATYFSLGTRCLNLLGFQQFMGDSEMTSDLIDEGKELIRREKGRRQRQEEGENRRREWKERYGNREDSTRNRVVHTEQKESSFSETNTNRPLSKYTRTNGRTERDRIELLQDAEPLDFNADSINDDPLESDSGRYQPGGRYLSMSRSRIFEDV.

The Extracellular portion of the chain corresponds to 1 to 3 (MSG). Residues 4 to 21 (AALGLEIVFVFFLALFLL) form a helical membrane-spanning segment. The Cytoplasmic portion of the chain corresponds to 22–32 (HRYGDFKKQHR). A helical transmembrane segment spans residues 33–53 (LVIIATLLAWYLCFLIVFILP). The Extracellular segment spans residues 54–99 (LDVSTTIYNRCKLAVNSSPAESNSSFVTLAPSKQQCFKPWSYIPNG). Asn-76 is a glycosylation site (N-linked (GlcNAc...) asparagine). A helical membrane pass occupies residues 100 to 120 (IMPIFWRVVYWTSQFLTWILL). The Cytoplasmic segment spans residues 121 to 144 (PFMQSYARSGGFSITGKIKTALIE). A helical transmembrane segment spans residues 145-165 (NAIYYGTYLLIFGAFLIYVAV). Residues 166 to 180 (NPKFNLQWNQLQTIG) lie on the Extracellular side of the membrane. Residues 181–201 (IAAANTWGLFLLVLLLGYGLV) traverse the membrane as a helical segment. Over 202–381 (EIPRSHWNGA…ECLLRPWFYR (180 aa)) the chain is Cytoplasmic. Positions 222–254 (FKAAKLMTEKADAEENLEDIMEEVRKVSESIKY) form a coiled coil. A helical membrane pass occupies residues 382–402 (VLAVVLAAFSVIVVWSECTFF). The Extracellular portion of the chain corresponds to 403 to 426 (STRPVLSLVAVFIQLAEKTYNYIY). Residues 427–447 (IEMACFLTIFFLSICVYSTVF) traverse the membrane as a helical segment. At 448 to 467 (RIRVFNYYYLASHHQTDAYS) the chain is on the cytoplasmic side. A helical transmembrane segment spans residues 468-488 (LLFSGMLFCRLTPPLCLNFLG). The Extracellular segment spans residues 489–515 (LTHMDATISHTDAQPTAYTSIMGSMKV). The helical transmembrane segment at 516-536 (LSFIADGFYIYYPMLVVILCI) threads the bilayer. At 537 to 688 (ATYFSLGTRC…MSRSRIFEDV (152 aa)) the chain is on the cytoplasmic side. The segment covering 600-617 (REDSTRNRVVHTEQKESS) has biased composition (basic and acidic residues). Residues 600-673 (REDSTRNRVV…ESDSGRYQPG (74 aa)) are disordered. Positions 618 to 634 (FSETNTNRPLSKYTRTN) are enriched in polar residues. Residues 635–644 (GRTERDRIEL) are compositionally biased toward basic and acidic residues.

It belongs to the LIMR family.

It localises to the cell membrane. Its function is as follows. May associate with G-protein coupled receptors and regulate downstream signaling pathways. The sequence is that of G-protein coupled receptor-associated protein LMBRD2 from Gallus gallus (Chicken).